Here is a 161-residue protein sequence, read N- to C-terminus: MEYNTSELCDMYLDVVDVVEPMFSNYGGCSSFGGSISTIKCFEDNGLITDVLQEDGQGKVLLVDGGGSLRRALIDGTIAELAVSNNWEGIIVYGSVRDVDALEELDIGIQALASIPVGADGNSVGEVDIPVNFGGVTFLPGDHIYADNTGIILSPEPLDIE.

It belongs to the RraA family. Homotrimer. Binds to both RNA-binding sites in the C-terminal region of Rne and to RhlB.

Its subcellular location is the cytoplasm. Functionally, globally modulates RNA abundance by binding to RNase E (Rne) and regulating its endonucleolytic activity. Can modulate Rne action in a substrate-dependent manner by altering the composition of the degradosome. Modulates RNA-binding and helicase activities of the degradosome. The chain is Regulator of ribonuclease activity A from Shewanella oneidensis (strain ATCC 700550 / JCM 31522 / CIP 106686 / LMG 19005 / NCIMB 14063 / MR-1).